The primary structure comprises 142 residues: Large ribosomal subunit protein uL11 (142 aa).

Belongs to the universal ribosomal protein uL11 family. In terms of assembly, part of the ribosomal stalk of the 50S ribosomal subunit. Interacts with L10 and the large rRNA to form the base of the stalk. L10 forms an elongated spine to which L12 dimers bind in a sequential fashion forming a multimeric L10(L12)X complex. In terms of processing, one or more lysine residues are methylated.

Its function is as follows. Forms part of the ribosomal stalk which helps the ribosome interact with GTP-bound translation factors. The polypeptide is Large ribosomal subunit protein uL11 (Rhodopseudomonas palustris (strain BisB5)).